An 83-amino-acid chain; its full sequence is Short neurotoxin D (83 aa).

The signal sequence occupies residues 1-21; that stretch reads MKTLLLTLVVVTMVCLDLGYT. Intrachain disulfides connect C24–C45, C38–C62, C64–C75, and C76–C81.

This sequence belongs to the three-finger toxin family. Short-chain subfamily. Type I alpha-neurotoxin sub-subfamily. As to expression, expressed by the venom gland.

The protein resides in the secreted. Functionally, binds to muscle nicotinic acetylcholine receptor (nAChR) and inhibit acetylcholine from binding to the receptor, thereby impairing neuromuscular transmission. In Laticauda colubrina (Yellow-lipped sea krait), this protein is Short neurotoxin D.